Consider the following 635-residue polypeptide: Chaperone protein HtpG (635 aa).

The tract at residues 1–344 (MSETATTNKE…SNDLPLNVSR (344 aa)) is a; substrate-binding. A b region spans residues 345–561 (EILQDNKITQ…DYEMGTQMAK (217 aa)). The interval 562 to 635 (LLAAAGQPVP…AVNQLLAPSH (74 aa)) is c.

Belongs to the heat shock protein 90 family. Homodimer.

The protein resides in the cytoplasm. Molecular chaperone. Has ATPase activity. The protein is Chaperone protein HtpG of Vibrio cholerae serotype O1 (strain ATCC 39541 / Classical Ogawa 395 / O395).